The following is a 537-amino-acid chain: Multidrug resistance protein Stp (537 aa).

14 consecutive transmembrane segments (helical) span residues 6 to 26, 46 to 66, 77 to 97, 104 to 124, 136 to 156, 163 to 183, 200 to 220, 223 to 243, 262 to 282, 300 to 320, 327 to 347, 352 to 372, 397 to 417, and 478 to 498; these read LLTL…ALIV, WVVA…ATLA, IGVS…SIAV, AQGL…SAAF, IWTA…GLLV, SIFY…LCYV, LLFI…PQIG, SVQT…FVWL, YALA…MLLL, LMIL…GHLV, VPIL…IFSE, ALVL…LTPI, AIGS…WLSA, and VALL…WRWF.

This sequence belongs to the major facilitator superfamily. EmrB family.

It is found in the cell membrane. The chain is Multidrug resistance protein Stp (stp) from Mycobacterium tuberculosis (strain CDC 1551 / Oshkosh).